A 421-amino-acid polypeptide reads, in one-letter code: MKLAYFDCPAGISGDMCLGALVDAGVPADYLIAQLAKLPMHDEYRLHFERVVKNGVAATKARVPLGERAGHTHRHLPEIRALLETASLPPRAAEWSVRVFVALAHAEALVHNTTPERVHFHEVGATDALVDVVGTCLGLDYLNIEALHCSALPVGGGLVHAAHGVMPVPTPAVVRLWESRRVPVYSNRIHRELVTPTGAAIACALAASFGEMPSMAVLRVGLGAGDMDLPIPNILRLWLGEATEPLLAARARTVTDVHAHAHHDHSHEEVVACLETQTDDLNPQISGYLFERLLAAGAADVFTVPVGMKKSRPGTLMTVLCAPHLLSTCEEILLRETTTLGVRRHFQVRSVLERHHEPVETIFGTVRIKVGSRDQQVLNAQPEFEDCRRLSEQTGQPLKLVQQVALATWHQRRPTQSERQN.

This sequence belongs to the LarC family.

The sequence is that of Putative nickel insertion protein from Gloeobacter violaceus (strain ATCC 29082 / PCC 7421).